We begin with the raw amino-acid sequence, 395 residues long: Hdr-like menaquinol oxidoreductase integral membrane subunit (395 aa).

Transmembrane regions (helical) follow at residues 15–35 (YFAL…AYVL), 57–77 (IPYF…AGVF), 88–108 (IAAY…ALDI), 126–146 (IFSW…IYLL), 158–178 (FMAG…GAIY), 196–216 (FIVC…YFTF), 231–251 (LALI…VEGL), 274–294 (VFWS…IIVL), 305–325 (ITFA…YLII), and 364–384 (IGLI…FALI).

The protein belongs to the NrfD family. As to quaternary structure, consists of five subunits: an integral membrane subunit, a cytochrome b-like subunit, a cytochrome c subunit and two iron-sulfur subunits.

It is found in the cell membrane. Functionally, has menaquinol-oxidizing activity. HmeB subunit may function as a menaquinol-oxidizing site. HmeA, HmeB and HmeE subunits may together catalyze electron transfer from menaquinol to cytochrome c. The protein is Hdr-like menaquinol oxidoreductase integral membrane subunit (hmeB) of Archaeoglobus fulgidus (strain ATCC 49558 / DSM 4304 / JCM 9628 / NBRC 100126 / VC-16).